Reading from the N-terminus, the 357-residue chain is MKAAIAQINTAALRHNLAVVKRHAPQCKIIAVVKANAYGHGLLPVARTLVDADAYAVARIEEALMLRSCAVVKPIVLLEGFFSAADLPVLAANNLQTAVHTWEQLEALEQADLPAPVVAWLKLDTGMHRLGVRADEMPAFIERLAKCKNVVQPFNIMTHFSRSDELEQPTTREQIDLFSQLTAPLLGERAMANSAGILAWPDSHCDWVRPGVILYGVSPFPNTVAADYDLQPVMTLKTQLIAVRDHKAGEPVGYGANWVSDRDTRLGVIAIGYGDGYPRMAPNGTPVLVNGRIVPLVGRVSMDMTTVDLGPGATDKAGDEAVLWGEGLPVERVADQIGTIPYELITKLTSRVFMEYV.

The active-site Proton acceptor; specific for D-alanine is the Lys-34. An N6-(pyridoxal phosphate)lysine modification is found at Lys-34. Residue Arg-129 coordinates substrate. Tyr-254 (proton acceptor; specific for L-alanine) is an active-site residue. Met-302 serves as a coordination point for substrate.

This sequence belongs to the alanine racemase family. The cofactor is pyridoxal 5'-phosphate.

The catalysed reaction is L-alanine = D-alanine. Its pathway is amino-acid biosynthesis; D-alanine biosynthesis; D-alanine from L-alanine: step 1/1. Functionally, catalyzes the interconversion of L-alanine and D-alanine. Likely plays an important role in supplying D-alanine, which is an indispensable constituent in the biosynthesis of bacterial cell-wall peptidoglycan. This Aeromonas hydrophila subsp. hydrophila (strain ATCC 7966 / DSM 30187 / BCRC 13018 / CCUG 14551 / JCM 1027 / KCTC 2358 / NCIMB 9240 / NCTC 8049) protein is Alanine racemase.